Consider the following 762-residue polypeptide: Hyperosmolality-gated Ca2+ permeable channel 2.2 (762 aa).

Transmembrane regions (helical) follow at residues 3–23 (VSAL…LVSL), 90–110 (MVIC…AFVL), 144–164 (LWVH…LLYF), 354–374 (IATL…VTFV), 402–422 (VITG…VPPL), 445–465 (KILY…GSVI), 500–520 (GWAG…NLIA), 557–577 (VIAP…YLIY), 594–614 (QYWP…QVIA), and 615–635 (LGFF…PLIL).

Belongs to the CSC1 (TC 1.A.17) family.

Its subcellular location is the membrane. Functionally, acts as an osmosensitive calcium-permeable cation channel. The polypeptide is Hyperosmolality-gated Ca2+ permeable channel 2.2 (Arabidopsis thaliana (Mouse-ear cress)).